A 394-amino-acid polypeptide reads, in one-letter code: NAC domain-containing protein 26 (394 aa).

An NAC domain is found at 7–156 (VPPGFRFHPT…GWVVCRVFKK (150 aa)). The DNA-binding element occupies 107 to 162 (IGMRKTLVFYKGRAPNGQKSDWIMHEYRLETSENGTPQEEGWVVCRVFKKKLAATV).

The protein belongs to the plant vascular related NAC-domain protein family. In terms of assembly, interacts with NAC083/VNI2. In terms of tissue distribution, detected in root vessels of protoxylems, outermost metaxylems, inner metaxylems, shoots and hypocotyls. Expressed in roots, hypocotyls, cotyledons and leaves. Expressed in developing xylems. Specifically expressed in vessels in the secondary xylem of the root-hypocotyl region, and in vessels but not in interfascicular fibers in stems.

The protein resides in the nucleus. Transcription activator that binds to the secondary wall NAC binding element (SNBE), 5'-(T/A)NN(C/T)(T/C/G)TNNNNNNNA(A/C)GN(A/C/T)(A/T)-3', in the promoter of target genes. Involved in xylem formation by promoting the expression of secondary wall-associated transcription factors and of genes involved in secondary wall biosynthesis and programmed cell death, genes driven by the secondary wall NAC binding element (SNBE). Triggers thickening of secondary walls. The protein is NAC domain-containing protein 26 of Arabidopsis thaliana (Mouse-ear cress).